The primary structure comprises 212 residues: Probable GTP-binding protein EngB (212 aa).

An EngB-type G domain is found at 22–212 (GVSEFAFFGR…NILSLIAKRI (191 aa)). GTP-binding positions include 30-37 (GRSNAGKS), 57-61 (GMTRE), 95-98 (DLPG), 162-165 (TKAD), and 192-195 (ISSA). Residues Ser37 and Thr59 each coordinate Mg(2+).

It belongs to the TRAFAC class TrmE-Era-EngA-EngB-Septin-like GTPase superfamily. EngB GTPase family. It depends on Mg(2+) as a cofactor.

In terms of biological role, necessary for normal cell division and for the maintenance of normal septation. The sequence is that of Probable GTP-binding protein EngB from Treponema denticola (strain ATCC 35405 / DSM 14222 / CIP 103919 / JCM 8153 / KCTC 15104).